A 476-amino-acid chain; its full sequence is Probable cytosolic Fe-S cluster assembly factor GH10760 (476 aa).

Residues Cys23, Cys68, Cys71, Cys74, Cys187, Cys243, Cys395, and Cys399 each contribute to the [4Fe-4S] cluster site.

It belongs to the NARF family.

Its function is as follows. Component of the cytosolic iron-sulfur (Fe/S) protein assembly machinery. Required for maturation of extramitochondrial Fe/S proteins. This Drosophila grimshawi (Hawaiian fruit fly) protein is Probable cytosolic Fe-S cluster assembly factor GH10760.